The following is a 568-amino-acid chain: Proline--tRNA ligase (568 aa).

The protein belongs to the class-II aminoacyl-tRNA synthetase family. ProS type 1 subfamily. In terms of assembly, homodimer.

It localises to the cytoplasm. The enzyme catalyses tRNA(Pro) + L-proline + ATP = L-prolyl-tRNA(Pro) + AMP + diphosphate. Its function is as follows. Catalyzes the attachment of proline to tRNA(Pro) in a two-step reaction: proline is first activated by ATP to form Pro-AMP and then transferred to the acceptor end of tRNA(Pro). As ProRS can inadvertently accommodate and process non-cognate amino acids such as alanine and cysteine, to avoid such errors it has two additional distinct editing activities against alanine. One activity is designated as 'pretransfer' editing and involves the tRNA(Pro)-independent hydrolysis of activated Ala-AMP. The other activity is designated 'posttransfer' editing and involves deacylation of mischarged Ala-tRNA(Pro). The misacylated Cys-tRNA(Pro) is not edited by ProRS. The protein is Proline--tRNA ligase of Listeria monocytogenes serovar 1/2a (strain ATCC BAA-679 / EGD-e).